The following is a 177-amino-acid chain: Large ribosomal subunit protein uL6 (177 aa).

It belongs to the universal ribosomal protein uL6 family. Part of the 50S ribosomal subunit.

In terms of biological role, this protein binds to the 23S rRNA, and is important in its secondary structure. It is located near the subunit interface in the base of the L7/L12 stalk, and near the tRNA binding site of the peptidyltransferase center. This Pseudomonas syringae pv. tomato (strain ATCC BAA-871 / DC3000) protein is Large ribosomal subunit protein uL6.